We begin with the raw amino-acid sequence, 328 residues long: Organic solute transporter alpha-like protein (328 aa).

Residues 1–44 are Extracellular-facing; sequence MNASENYFTMDPTENISQVLDQNRNNTNSLRTHPTVEEYYENMT. Residues N2, N15, N25, and N42 are each glycosylated (N-linked (GlcNAc...) asparagine). The helical transmembrane segment at 45-65 threads the bilayer; the sequence is AFLSLAIFIASLLTILNISIF. The Cytoplasmic segment spans residues 66-84; the sequence is ATTVSRLRRHLDKPLLGPS. The helical transmembrane segment at 85–105 threads the bilayer; sequence IMMVGLYPIISVAALVTILVP. Position 106 (Y106) is a topological domain, extracellular. A helical membrane pass occupies residues 107–127; the sequence is SWFICHTVMHVMFMVGGPVFR. Topologically, residues 128–177 are cytoplasmic; that stretch reads TLLFRYVGSEQNYVKETAGEAVQLNTPPCCCCCLCLPMVIPTKAKLCISR. Residues 178 to 198 traverse the membrane as a helical segment; sequence YMVWQMPFWQGSIMLVMNILY. Residues 199 to 208 lie on the Extracellular side of the membrane; it reads YRDIQLYRQV. Residues 209–229 traverse the membrane as a helical segment; the sequence is MFFFIPFIVCSIVLGAWSLQI. At 230–247 the chain is on the cytoplasmic side; that stretch reads TVRMITKVRGDYQLRKKM. A helical transmembrane segment spans residues 248-265; that stretch reads FCLQLVVMLCKLQYLVLY. The Extracellular portion of the chain corresponds to 266–287; it reads DQLDGIKMGGEYPINHTVYKQT. N280 is a glycosylation site (N-linked (GlcNAc...) asparagine). A helical transmembrane segment spans residues 288-308; it reads IINILILVEMVLVSMMVQSAY. Over 309-328 the chain is Cytoplasmic; that stretch reads RTPVQVQIDEVNKEKEVTRI.

The protein belongs to the OST-alpha family.

It is found in the cell membrane. Its function is as follows. Probable transporter. This is Organic solute transporter alpha-like protein from Drosophila melanogaster (Fruit fly).